Here is a 426-residue protein sequence, read N- to C-terminus: 3-phosphoshikimate 1-carboxyvinyltransferase (426 aa).

Residues Lys22, Ser23, and Arg27 each contribute to the 3-phosphoshikimate site. Lys22 provides a ligand contact to phosphoenolpyruvate. Residues Gly96 and Arg124 each coordinate phosphoenolpyruvate. 7 residues coordinate 3-phosphoshikimate: Ser170, Ser171, Gln172, Ser198, Asp314, Asn337, and Lys341. Residue Gln172 coordinates phosphoenolpyruvate. Asp314 (proton acceptor) is an active-site residue. Arg345, Arg387, and Lys412 together coordinate phosphoenolpyruvate.

This sequence belongs to the EPSP synthase family. In terms of assembly, monomer.

It is found in the cytoplasm. It catalyses the reaction 3-phosphoshikimate + phosphoenolpyruvate = 5-O-(1-carboxyvinyl)-3-phosphoshikimate + phosphate. The protein operates within metabolic intermediate biosynthesis; chorismate biosynthesis; chorismate from D-erythrose 4-phosphate and phosphoenolpyruvate: step 6/7. Catalyzes the transfer of the enolpyruvyl moiety of phosphoenolpyruvate (PEP) to the 5-hydroxyl of shikimate-3-phosphate (S3P) to produce enolpyruvyl shikimate-3-phosphate and inorganic phosphate. The chain is 3-phosphoshikimate 1-carboxyvinyltransferase from Shewanella sp. (strain ANA-3).